The sequence spans 136 residues: DNA-binding protein H-NS (136 aa).

The stretch at 13 to 67 (TLRAQARECTLETLEEMLEKLEVVVNERREEDSQAQAEIEERTRKLQQYREMLIA) forms a coiled coil. A DNA-binding region spans residues 113-118 (QGRTPA).

It belongs to the histone-like protein H-NS family. As to quaternary structure, interacts with YmoA in the absence of DNA. Homodimer that oligomerizes on DNA into higher-order complexes that form bridges between disparate regions of DNA compacting it. Interacts with YmoA.

The protein localises to the cytoplasm. It localises to the nucleoid. Functionally, a DNA-binding protein implicated in transcriptional repression and chromosome organization and compaction. Binds nucleation sites in AT-rich DNA and bridges them, forming higher-order nucleoprotein complexes and condensing the chromosome. As many horizontally transferred genes are AT-rich, it plays a central role in silencing foreign genes. A subset of genes are repressed by H-NS in association with YmoA. Complements a number of hns deficiencies in E.coli; represses the bgl operon, represses hemolysin expression. The chain is DNA-binding protein H-NS from Yersinia enterocolitica.